A 321-amino-acid polypeptide reads, in one-letter code: 4-hydroxy-2-oxoglutarate aldolase, mitochondrial (321 aa).

The transit peptide at 1-23 (MLGPQIWASMRQGLSRGLSRNVK) directs the protein to the mitochondrion. 71–72 (ST) lines the substrate pocket. K190 functions as the Schiff-base intermediate with substrate in the catalytic mechanism. Substrate-binding residues include S192 and G216.

This sequence belongs to the DapA family. Homotetramer.

It localises to the mitochondrion. It carries out the reaction (4S)-4-hydroxy-2-oxoglutarate = glyoxylate + pyruvate. The enzyme catalyses (4R)-4-hydroxy-2-oxoglutarate = glyoxylate + pyruvate. With respect to regulation, inhibited by divalent cations. In terms of biological role, catalyzes the final step in the metabolic pathway of hydroxyproline. The chain is 4-hydroxy-2-oxoglutarate aldolase, mitochondrial (Hoga1) from Mus musculus (Mouse).